We begin with the raw amino-acid sequence, 243 residues long: tRNA pseudouridine synthase A (243 aa).

Asp51 (nucleophile) is an active-site residue. Tyr111 serves as a coordination point for substrate.

The protein belongs to the tRNA pseudouridine synthase TruA family. In terms of assembly, homodimer.

The enzyme catalyses uridine(38/39/40) in tRNA = pseudouridine(38/39/40) in tRNA. Its function is as follows. Formation of pseudouridine at positions 38, 39 and 40 in the anticodon stem and loop of transfer RNAs. This is tRNA pseudouridine synthase A from Neorickettsia sennetsu (strain ATCC VR-367 / Miyayama) (Ehrlichia sennetsu).